A 213-amino-acid polypeptide reads, in one-letter code: uncharacterized protein (213 aa).

S-adenosyl-L-methionine-binding residues include Gly53, Glu74, and Asp97.

This sequence belongs to the methyltransferase superfamily. YrrT family.

Could be a S-adenosyl-L-methionine-dependent methyltransferase. This is an uncharacterized protein from Geobacillus sp. (strain WCH70).